Consider the following 150-residue polypeptide: Urease accessory protein UreE (150 aa).

It belongs to the UreE family.

It is found in the cytoplasm. Involved in urease metallocenter assembly. Binds nickel. Probably functions as a nickel donor during metallocenter assembly. This Staphylococcus aureus (strain Mu3 / ATCC 700698) protein is Urease accessory protein UreE.